The sequence spans 547 residues: Phospholipase DDHD1 (547 aa).

Ser-184 is a catalytic residue. Residues Leu-258–Lys-533 form the DDHD domain. Ser-370 bears the Phosphoserine mark. The tract at residues Arg-414 to Leu-448 is disordered. Basic and acidic residues predominate over residues Pro-423–Pro-434. Low complexity predominate over residues Ser-435–Leu-448.

Belongs to the PA-PLA1 family. As to quaternary structure, forms homooligomers and, to a much smaller extent, heterooligomers with DDHD2. Interacts with SEC23A and SEC24C. Predominantly expressed in testis, in round and elongating spermatids, but not in spermatocytes (at protein level). Also expressed in the brain, and at lower levels in other tissues such as thymus and lung (at protein level).

It is found in the cytoplasm. It carries out the reaction a 1,2-diacyl-sn-glycero-3-phosphate + H2O = a 2-acyl-sn-glycerol 3-phosphate + a fatty acid + H(+). The catalysed reaction is a 1,2-diacyl-sn-glycero-3-phospho-(1D-myo-inositol) + H2O = a 2-acyl-sn-glycero-3-phospho-D-myo-inositol + a fatty acid + H(+). It catalyses the reaction 1-octadecanoyl-2-(5Z,8Z,11Z,14Z-eicosatetraenoyl)-sn-glycero-3-phospho-(1D-myo-inositol) + H2O = 2-(5Z,8Z,11Z,14Z-eicosatetraenoyl)-sn-glycero-3-phospho-(1D-myo-inositol) + octadecanoate + H(+). The enzyme catalyses a 1-acyl-2-(5Z,8Z,11Z,14Z-eicosatetraenoyl)-sn-glycero-3-phospho-(1D-myo-inositol) + H2O = 2-(5Z,8Z,11Z,14Z-eicosatetraenoyl)-sn-glycero-3-phospho-(1D-myo-inositol) + a fatty acid + H(+). It carries out the reaction 1,2-dihexadecanoyl-sn-glycero-3-phospho-(1D-myo-inositol) + H2O = 2-hexadecanoyl-sn-glycero-3-phospho-(1D-myo-inositol) + hexadecanoate + H(+). The catalysed reaction is a 1-acyl-2-(5Z,8Z,11Z,14Z)-eicosatetraenoyl-sn-glycero-3-phosphate + H2O = 2-(5Z,8Z,11Z,14Z-eicosatetraenoyl)-sn-glycero-3-phosphate + a fatty acid + H(+). It catalyses the reaction 1-(9Z-octadecenoyl)-2-(7Z,10Z,13Z,16Z,19Z-docosapentaenoyl)-sn-glycero-3-phospho-1D-myo-inositol + H2O = 2-(7Z,10Z,13Z,16Z,19Z-docosapentaenoyl)-sn-glycero-3-phospho-1D-myo-inositol + (9Z)-octadecenoate + H(+). The enzyme catalyses 1-(9Z-octadecenoyl)-2-(5Z,8Z,11Z,14Z-eicosatetraenoyl)-sn-glycero-3-phospho-1D-myo-inositol + H2O = 2-(5Z,8Z,11Z,14Z-eicosatetraenoyl)-sn-glycero-3-phospho-(1D-myo-inositol) + (9Z)-octadecenoate + H(+). It carries out the reaction 1,2-di-(9Z-octadecenoyl)-sn-glycero-3-phospho-1D-myo-inositol + H2O = 2-(9Z-octadecenoyl)-sn-glycero-3-phospho-1D-myo-inositol + (9Z)-octadecenoate + H(+). The catalysed reaction is 1-(9Z-octadecenoyl)-2-(8Z,11Z,14Z-eicosatrienoyl)-sn-glycero-3-phospho-1D-myo-inositol + H2O = 2-(8Z,11Z,14Z-eicosatrienoyl)-sn-glycero-3-phospho-1D-myo-inositol + (9Z)-octadecenoate + H(+). It catalyses the reaction 1,2-di-(9Z-octadecenoyl)-sn-glycero-3-phosphate + H2O = 2-(9Z-octadecenoyl)-sn-glycero-3-phosphate + (9Z)-octadecenoate + H(+). The enzyme catalyses 1-hexadecanoyl-2-(9Z-octadecenoyl)-sn-glycero-3-phosphate + H2O = 2-(9Z-octadecenoyl)-sn-glycero-3-phosphate + hexadecanoate + H(+). It carries out the reaction 1-hexadecanoyl-2-(9Z-octadecenoyl)-sn-glycero-3-phospho-L-serine + H2O = 2-(9Z-octadecenoyl)-sn-glycero-3-phospho-L-serine + hexadecanoate + H(+). The catalysed reaction is 1,2-di-(5Z,8Z,11Z,14Z)-eicosatetraenoyl-sn-glycero-3-phosphate + H2O = 2-(5Z,8Z,11Z,14Z-eicosatetraenoyl)-sn-glycero-3-phosphate + (5Z,8Z,11Z,14Z)-eicosatetraenoate + H(+). It catalyses the reaction 1-octadecanoyl-2-(5Z,8Z,11Z,14Z-eicosatetraenoyl)-sn-glycero-3-phosphate + H2O = 2-(5Z,8Z,11Z,14Z-eicosatetraenoyl)-sn-glycero-3-phosphate + octadecanoate + H(+). The enzyme catalyses a 1,2-diacyl-sn-glycero-3-phospho-L-serine + H2O = a 2-acyl-sn-glycero-3-phospho-L-serine + a fatty acid + H(+). It carries out the reaction a 1,2-diacyl-sn-glycero-3-phosphocholine + H2O = a 2-acyl-sn-glycero-3-phosphocholine + a fatty acid + H(+). The catalysed reaction is 1,2-di-(9Z-octadecenoyl)-sn-glycero-3-phosphocholine + H2O = (9Z-octadecenoyl)-sn-glycero-3-phosphocholine + (9Z)-octadecenoate + H(+). It catalyses the reaction a 1,2-diacyl-sn-glycero-3-phosphoethanolamine + H2O = a 2-acyl-sn-glycero-3-phosphoethanolamine + a fatty acid + H(+). The enzyme catalyses a 1,2-diacyl-sn-glycero-3-phospho-(1'-sn-glycerol) + H2O = 2-acyl-sn-glycero-3-phospho-(1'-sn-glycerol) + a fatty acid + H(+). It carries out the reaction 1-hexadecanoyl-2-(9Z-octadecenoyl)-sn-glycero-3-phospho-(1'-sn-glycerol) + H2O = 2-(9Z-octadecenoyl)-sn-glycero-3-phospho-(1'-sn-glycerol) + hexadecanoate + H(+). The catalysed reaction is 1-acyl-2-(5Z,8Z,11Z,14Z-eicosatetraenoyl)-sn-glycero-3-phosphocholine + H2O = 2-(5Z,8Z,11Z,14Z)-eicosatetraenoyl-sn-glycero-3-phosphocholine + a fatty acid + H(+). It catalyses the reaction 1-acyl-2-(5Z,8Z,11Z,14Z)-eicosatetraenoyl-sn-glycero-3-phosphoethanolamine + H2O = 2-(5Z,8Z,11Z,14Z)-eicosatetraenoyl-sn-glycero-3-phosphoethanolamine + a fatty acid + H(+). The protein operates within phospholipid metabolism; phosphatidylinositol metabolism. Functionally, phospholipase A1 (PLA1) that hydrolyzes ester bonds at the sn-1 position of glycerophospholipids producing a free fatty acid and a lysophospholipid. Prefers phosphatidate (1,2-diacyl-sn-glycero-3-phosphate, PA) as substrate in vitro, but can efficiently hydrolyze phosphatidylinositol (1,2-diacyl-sn-glycero-3-phospho-(1D-myo-inositol), PI), as well as a range of other glycerophospholipid substrates such as phosphatidylcholine (1,2-diacyl-sn-glycero-3-phosphocholine, PC), phosphatidylethanolamine (1,2-diacyl-sn-glycero-3-phosphoethanolamine, PE), phosphatidylserine (1,2-diacyl-sn-glycero-3-phospho-L-serine, PS) and phosphatidylglycerol (1,2-diacyl-sn-glycero-3-phospho-(1'-sn-glycerol), PG). Involved in the regulation of the endogenous content of polyunsaturated PI and PS lipids in the nervous system. Changes in these lipids extend to downstream metabolic products like PI phosphates PIP and PIP2, which play fundamental roles in cell biology. Regulates mitochondrial morphology. These dynamic changes may be due to PA hydrolysis at the mitochondrial surface. May play a regulatory role in spermatogenesis or sperm function. The sequence is that of Phospholipase DDHD1 from Mus musculus (Mouse).